We begin with the raw amino-acid sequence, 382 residues long: tRNA (guanine-N(7)-)-methyltransferase non-catalytic subunit wuho (382 aa).

A disordered region spans residues 40–59; that stretch reads VKDTDAGNEPNGNQTQPTPA. Residues 49–59 are compositionally biased toward polar residues; it reads PNGNQTQPTPA. 2 WD repeats span residues 149-190 and 192-230; these read GHMS…ECFC and GHTEYVGGIEIIPSEKLISVSGDRTLRLWDVTEGKELSK.

This sequence belongs to the WD repeat TRM82 family. In terms of assembly, forms a heterodimer with the catalytic subunit.

It is found in the nucleus. It functions in the pathway tRNA modification; N(7)-methylguanine-tRNA biosynthesis. In terms of biological role, required for the formation of N(7)-methylguanine at position 46 (m7G46) in tRNA. In the complex, it is required to stabilize and induce conformational changes of the catalytic subunit. This is tRNA (guanine-N(7)-)-methyltransferase non-catalytic subunit wuho from Anopheles gambiae (African malaria mosquito).